Reading from the N-terminus, the 209-residue chain is Orotate phosphoribosyltransferase (209 aa).

5-phospho-alpha-D-ribose 1-diphosphate-binding positions include Arg96, Lys100, His102, and 122 to 130 (EDLISTGGS). Ser126 lines the orotate pocket.

This sequence belongs to the purine/pyrimidine phosphoribosyltransferase family. PyrE subfamily. Homodimer. It depends on Mg(2+) as a cofactor.

The enzyme catalyses orotidine 5'-phosphate + diphosphate = orotate + 5-phospho-alpha-D-ribose 1-diphosphate. It functions in the pathway pyrimidine metabolism; UMP biosynthesis via de novo pathway; UMP from orotate: step 1/2. Catalyzes the transfer of a ribosyl phosphate group from 5-phosphoribose 1-diphosphate to orotate, leading to the formation of orotidine monophosphate (OMP). This is Orotate phosphoribosyltransferase from Listeria monocytogenes serotype 4b (strain F2365).